A 37-amino-acid chain; its full sequence is ACVGENKQCADWAGPHCCDGYYCTCRYFPKCICRNNN.

4 cysteine pairs are disulfide-bonded: C2–C18, C9–C23, C17–C33, and C25–C31. N37 carries the asparagine amide modification.

This sequence belongs to the neurotoxin 07 (Beta/delta-agtx) family. 03 (aga-4) subfamily. Aga sub-subfamily. As to expression, expressed by the venom gland.

The protein resides in the secreted. Functionally, insecticidal neurotoxin that induces an irreversible spastic paralysis when injected into insects. Modifies presynaptic voltage-gated sodium channels (Nav), causing them to open at the normal resting potential of the nerve. This leads to spontaneous release of neurotransmitter and repetitive action potentials in motor neurons. The sequence is that of Mu-agatoxin-Aa1e from Agelenopsis aperta (North American funnel-web spider).